Here is a 649-residue protein sequence, read N- to C-terminus: Drebrin (649 aa).

A2 bears the N-acetylalanine mark. An ADF-H domain is found at 3–134 (GVSFSGHRLE…DAGAIGQRLS (132 aa)). S141 and S142 each carry phosphoserine. Basic and acidic residues-rich tracts occupy residues 208-236 (QERM…EEHR) and 288-298 (DNPREFFKQQE). Disordered regions lie at residues 208-420 (QERM…PAED), 477-502 (DLWP…PSGT), and 538-620 (EPPA…PPPV). T331 and T335 each carry phosphothreonine. Residues 334–348 (PTRSPSDSSTASTPV) are compositionally biased toward polar residues. Phosphoserine is present on residues S337, S339, and S345. A Phosphothreonine modification is found at T346. The segment covering 363–374 (QPPPLPPPPPPA) has biased composition (pro residues). A Phosphoserine modification is found at S416. Position 497 is a phosphothreonine (T497). Residues 582-594 (NGETTQKEGTQAS) show a composition bias toward polar residues. S601 is subject to Phosphoserine.

In terms of assembly, interacts with RUFY3. Interacts with CXCR4; this interaction is enhanced by antigenic stimulation. Interacts (via ADF-H domain) with ZMYND8 (via N-terminus); the interaction leads to sequestering of ZMYND8 in the cytoplasm. As to expression, expressed in the brain, with expression in the molecular layer of the dentate gyrus, stratum pyramidale, and stratum radiatum of the hippocampus (at protein level). Also expressed in the terminal varicosities distributed along dendritic trees of pyramidal cells in CA4 and CA3 of the hippocampus (at protein level). Expressed in pyramidal cells in CA2, CA1 and the subiculum of the hippocampus (at protein level). Expressed in peripheral blood lymphocytes, including T-cells (at protein level). Expressed in the brain. Expressed in the heart, placenta, lung, skeletal muscle, kidney, pancreas, skin fibroblasts, gingival fibroblasts and bone-derived cells.

It localises to the cytoplasm. Its subcellular location is the cell projection. The protein localises to the dendrite. It is found in the cell cortex. The protein resides in the cell junction. It localises to the growth cone. Functionally, actin cytoskeleton-organizing protein that plays a role in the formation of cell projections. Required for actin polymerization at immunological synapses (IS) and for the recruitment of the chemokine receptor CXCR4 to IS. Plays a role in dendritic spine morphogenesis and organization, including the localization of the dopamine receptor DRD1 to the dendritic spines. Involved in memory-related synaptic plasticity in the hippocampus. The sequence is that of Drebrin (DBN1) from Homo sapiens (Human).